A 311-amino-acid polypeptide reads, in one-letter code: Olfactory receptor 287 (311 aa).

Residues 1-27 (MAWSTGQNLSTPGPFILLGFPGPRSMR) lie on the Extracellular side of the membrane. Residue Asn8 is glycosylated (N-linked (GlcNAc...) asparagine). Residues 28–53 (IGLFLLFLVMYLLTVVGNLAIISLVG) traverse the membrane as a helical segment. Over 54–60 (AHRCLQT) the chain is Cytoplasmic. The helical transmembrane segment at 61 to 82 (PMYFFLCNLSFLEIWFTTACVP) threads the bilayer. Residues 83-103 (KTLATFAPRGGVISLAGCATQ) are Extracellular-facing. A disulfide bridge links Cys100 with Cys192. Residues 104 to 123 (MYFVFSLGCTEYFLLAVMAY) traverse the membrane as a helical segment. Over 124-142 (DRYLAICLPLRYGGIMTPG) the chain is Cytoplasmic. A helical transmembrane segment spans residues 143–161 (LAMRLALGSWLCGFSAITV). Over 162–199 (PATLIARLSFCGSRVINHFFCDISPWIVLSCTDTQVVE) the chain is Extracellular. A helical transmembrane segment spans residues 200–222 (LVSFGIAFCVILGSCGITLVSYA). Residues 223–239 (YIITTIIKIPSARGRHR) are Cytoplasmic-facing. The chain crosses the membrane as a helical span at residues 240 to 263 (AFSTCSSHLTVVLIWYGSTIFLHV). Over 264-275 (RTSVESSLDLTK) the chain is Extracellular. A helical membrane pass occupies residues 276-295 (AITVLNTIVTPVLNPFIYTL). Residues 296-311 (RNKDVKEALRRTVKGK) are Cytoplasmic-facing.

This sequence belongs to the G-protein coupled receptor 1 family. In terms of tissue distribution, olfactory epithelium.

The protein localises to the cell membrane. Its function is as follows. Odorant receptor. The chain is Olfactory receptor 287 (Olr287) from Rattus norvegicus (Rat).